Reading from the N-terminus, the 370-residue chain is Serine/threonine-protein kinase SAPK5 (370 aa).

One can recognise a Protein kinase domain in the interval 4 to 260 (YEPVREIGAG…MGEIKSHPWF (257 aa)). ATP is bound by residues 10 to 18 (IGAGNFGVA) and K33. The active-site Proton acceptor is the D123. The segment at 312–370 (EAQTVPKPDKPVSGYGWGTDDDDDDQQPAEEEDEEDDYDRTVREVHASVDLDMSNLQIS) is disordered. Acidic residues predominate over residues 330–349 (TDDDDDDQQPAEEEDEEDDY). Residues 350-360 (DRTVREVHASV) show a composition bias toward basic and acidic residues.

The protein belongs to the protein kinase superfamily. Ser/Thr protein kinase family. In terms of processing, may be phosphorylated. As to expression, expressed in leaf blades, leaf sheaths and roots. Expressed in shoots and roots of young seedlings.

It is found in the cytoplasm. It localises to the nucleus. It carries out the reaction L-seryl-[protein] + ATP = O-phospho-L-seryl-[protein] + ADP + H(+). It catalyses the reaction L-threonyl-[protein] + ATP = O-phospho-L-threonyl-[protein] + ADP + H(+). Activated by hyperosmotic stress. May play a role in signal transduction of hyperosmotic response. The polypeptide is Serine/threonine-protein kinase SAPK5 (SAPK5) (Oryza sativa subsp. japonica (Rice)).